The primary structure comprises 580 residues: Benzoate--CoA ligase, peroxisomal (580 aa).

The Microbody targeting signal motif lies at 578-580 (SRL).

This sequence belongs to the ATP-dependent AMP-binding enzyme family.

Its subcellular location is the peroxisome. The catalysed reaction is benzoate + ATP + CoA = benzoyl-CoA + AMP + diphosphate. Its function is as follows. Benzoate--CoA ligase involved in benzoyloxyglucosinolate biosynthesis in seeds. Glucosinolates are secondary metabolites involved in pathogen and insect defense of cruciferous plants. The chain is Benzoate--CoA ligase, peroxisomal (AAE20) from Arabidopsis thaliana (Mouse-ear cress).